Here is a 100-residue protein sequence, read N- to C-terminus: Cobalt transport protein CbiN (100 aa).

Helical transmembrane passes span 8–28 (LSNW…LIFV) and 69–89 (LLFS…VGLY).

This sequence belongs to the CbiN family. As to quaternary structure, forms an energy-coupling factor (ECF) transporter complex composed of an ATP-binding protein (A component, CbiO), a transmembrane protein (T component, CbiQ) and 2 possible substrate-capture proteins (S components, CbiM and CbiN) of unknown stoichimetry.

The protein resides in the cell inner membrane. It participates in cofactor biosynthesis; adenosylcobalamin biosynthesis. In terms of biological role, part of the energy-coupling factor (ECF) transporter complex CbiMNOQ involved in cobalt import. This is Cobalt transport protein CbiN from Nostoc sp. (strain PCC 7120 / SAG 25.82 / UTEX 2576).